Here is a 151-residue protein sequence, read N- to C-terminus: D-aminoacyl-tRNA deacylase (151 aa).

The Gly-cisPro motif, important for rejection of L-amino acids motif lies at 137 to 138 (GP).

It belongs to the DTD family. In terms of assembly, homodimer.

The protein resides in the cytoplasm. It catalyses the reaction glycyl-tRNA(Ala) + H2O = tRNA(Ala) + glycine + H(+). The catalysed reaction is a D-aminoacyl-tRNA + H2O = a tRNA + a D-alpha-amino acid + H(+). In terms of biological role, an aminoacyl-tRNA editing enzyme that deacylates mischarged D-aminoacyl-tRNAs. Also deacylates mischarged glycyl-tRNA(Ala), protecting cells against glycine mischarging by AlaRS. Acts via tRNA-based rather than protein-based catalysis; rejects L-amino acids rather than detecting D-amino acids in the active site. By recycling D-aminoacyl-tRNA to D-amino acids and free tRNA molecules, this enzyme counteracts the toxicity associated with the formation of D-aminoacyl-tRNA entities in vivo and helps enforce protein L-homochirality. The chain is D-aminoacyl-tRNA deacylase from Azoarcus sp. (strain BH72).